We begin with the raw amino-acid sequence, 442 residues long: NADH-quinone oxidoreductase subunit D (442 aa).

The protein belongs to the complex I 49 kDa subunit family. In terms of assembly, NDH-1 is composed of 14 different subunits. Subunits NuoB, C, D, E, F, and G constitute the peripheral sector of the complex.

The protein resides in the cell membrane. The catalysed reaction is a quinone + NADH + 5 H(+)(in) = a quinol + NAD(+) + 4 H(+)(out). Functionally, NDH-1 shuttles electrons from NADH, via FMN and iron-sulfur (Fe-S) centers, to quinones in the respiratory chain. The immediate electron acceptor for the enzyme in this species is believed to be a menaquinone. Couples the redox reaction to proton translocation (for every two electrons transferred, four hydrogen ions are translocated across the cytoplasmic membrane), and thus conserves the redox energy in a proton gradient. This is NADH-quinone oxidoreductase subunit D from Mycolicibacterium vanbaalenii (strain DSM 7251 / JCM 13017 / BCRC 16820 / KCTC 9966 / NRRL B-24157 / PYR-1) (Mycobacterium vanbaalenii).